Here is a 464-residue protein sequence, read N- to C-terminus: tRNA modification GTPase MnmE (464 aa).

Residues Arg25, Glu87, and Lys130 each contribute to the (6S)-5-formyl-5,6,7,8-tetrahydrofolate site. The region spanning 226 to 386 (GLSVVLAGQP…LRAELLRIAG (161 aa)) is the TrmE-type G domain. Residue Asn236 coordinates K(+). GTP-binding positions include 236–241 (NVGKSS), 255–261 (TPIAGTT), and 280–283 (DTAG). Position 240 (Ser240) interacts with Mg(2+). Positions 255, 257, and 260 each coordinate K(+). Thr261 provides a ligand contact to Mg(2+). Lys464 provides a ligand contact to (6S)-5-formyl-5,6,7,8-tetrahydrofolate.

The protein belongs to the TRAFAC class TrmE-Era-EngA-EngB-Septin-like GTPase superfamily. TrmE GTPase family. As to quaternary structure, homodimer. Heterotetramer of two MnmE and two MnmG subunits. K(+) serves as cofactor.

The protein localises to the cytoplasm. Exhibits a very high intrinsic GTPase hydrolysis rate. Involved in the addition of a carboxymethylaminomethyl (cmnm) group at the wobble position (U34) of certain tRNAs, forming tRNA-cmnm(5)s(2)U34. The sequence is that of tRNA modification GTPase MnmE from Burkholderia orbicola (strain MC0-3).